The following is a 584-amino-acid chain: Transcription factor 7-like 1 (584 aa).

Residues 1-28 are compositionally biased toward gly residues; that stretch reads MPQLGGGRGGAGGGGGGSGAGATSGGDD. The tract at residues 1 to 71 is CTNNB1-binding; it reads MPQLGGGRGG…VKSSLVNESE (71 aa). Disordered stretches follow at residues 1 to 99, 159 to 179, and 194 to 231; these read MPQL…RDYF, ATVK…VPVV, and YSND…SPYY. The span at 64 to 78 shows a compositional bias: low complexity; it reads SSLVNESENQSSSSD. Over residues 80-99 the composition is skewed to basic and acidic residues; that stretch reads EAERRPQPARDAFQKPRDYF. A DNA-binding region (HMG box) is located at residues 342–410; that stretch reads VKKPLNAFML…LHAQLYPTWS (69 aa). Positions 412–501 are disordered; it reads RDNYGKKKKR…HSEQAQPLSL (90 aa). The Nuclear localization signal signature appears at 417–423; it reads KKKKRKR. 2 stretches are compositionally biased toward low complexity: residues 427-437 and 470-491; these read LSQTQSQQQIQ and SALD…PAAT. The segment covering 492 to 501 has biased composition (polar residues); that stretch reads HSEQAQPLSL.

Belongs to the TCF/LEF family. In terms of assembly, binds the armadillo repeat of CTNNB1 and forms a stable complex. Interacts with DAZAP2. In terms of tissue distribution, detected in the basal layer of epidermis and in outer root sheath and bulge of hair follicles.

The protein localises to the nucleus. Functionally, participates in the Wnt signaling pathway. Binds to DNA and acts as a repressor in the absence of CTNNB1, and as an activator in its presence. Necessary for the terminal differentiation of epidermal cells, the formation of keratohyalin granules and the development of the barrier function of the epidermis. This Mus musculus (Mouse) protein is Transcription factor 7-like 1 (Tcf7l1).